Consider the following 209-residue polypeptide: Putative NAD(P)H nitroreductase YdgI (209 aa).

FMN contacts are provided by residues 14–16, 72–74, 161–162, and arginine 199; these read RRS, QTQ, and GG.

This sequence belongs to the nitroreductase family. It depends on FMN as a cofactor.

The polypeptide is Putative NAD(P)H nitroreductase YdgI (ydgI) (Bacillus subtilis (strain 168)).